Consider the following 143-residue polypeptide: Small ribosomal subunit protein uS12 (143 aa).

Basic residues predominate over residues 1–20 (MGKPRGLRTARKHRSHRRDQ). Residues 1 to 26 (MGKPRGLRTARKHRSHRRDQRWHDKD) form a disordered region. Proline 62 carries the hydroxyproline modification.

This sequence belongs to the universal ribosomal protein uS12 family. As to quaternary structure, component of the 40S small ribosomal subunit.

It localises to the cytoplasm. The protein localises to the cytosol. The protein resides in the rough endoplasmic reticulum. The polypeptide is Small ribosomal subunit protein uS12 (RpS23) (Dermacentor variabilis (American dog tick)).